The chain runs to 53 residues: Light-harvesting protein B-800/820 alpha chain (53 aa).

At 1 to 14 (MNQGKIWTVVNPAV) the chain is on the cytoplasmic side. Residues 15–35 (GLPLLLGSVAITALLVHLAVL) form a helical membrane-spanning segment. His-31 provides a ligand contact to a bacteriochlorophyll. Topologically, residues 36 to 53 (THTTWFPAFTQGGLKKAA) are periplasmic.

It belongs to the antenna complex alpha subunit family. The core complex is formed by different alpha and beta chains, binding bacteriochlorophyll molecules, and arranged most probably in tetrameric structures disposed around the reaction center. The non-pigmented gamma chains may constitute additional components.

The protein localises to the cell inner membrane. Functionally, antenna complexes are light-harvesting systems, which transfer the excitation energy to the reaction centers. This Rhodoblastus acidophilus (Rhodopseudomonas acidophila) protein is Light-harvesting protein B-800/820 alpha chain.